A 204-amino-acid polypeptide reads, in one-letter code: Methyl-CpG-binding domain protein 3-like 2B (204 aa).

Residues S126–S137 show a composition bias toward basic and acidic residues. A disordered region spans residues S126–R145.

Belongs to the MBD3L family.

This Homo sapiens (Human) protein is Methyl-CpG-binding domain protein 3-like 2B.